A 239-amino-acid chain; its full sequence is MDFFSTHNILIHIPIGAGGYDLSWIEAVGTIAGLLCIWLASLEKISNYFFGLVNVTLFAIIFFQIQLYASLLLQLFFFAANIYGWYAWSRQTKDNQAELKIRWLPLPKAMAWLAICVIAIGLMTRYIDPVFAVLTRVAVAIMQMLGLQVTMPVLQPDAFPFWDSCMMVLSIVAMILMTRKYVENWLLWVIINVISVVIFALQGVYAMSLEYLILTFIAVNGSRLWINSARERGSRALSR.

At 1 to 21 (MDFFSTHNILIHIPIGAGGYD) the chain is on the cytoplasmic side. The helical transmembrane segment at 22–42 (LSWIEAVGTIAGLLCIWLASL) threads the bilayer. Residues 43–48 (EKISNY) are Periplasmic-facing. The helical transmembrane segment at 49–68 (FFGLVNVTLFAIIFFQIQLY) threads the bilayer. Residues 69–71 (ASL) lie on the Cytoplasmic side of the membrane. A helical membrane pass occupies residues 72 to 89 (LLQLFFFAANIYGWYAWS). Topologically, residues 90–109 (RQTKDNQAELKIRWLPLPKA) are periplasmic. A helical transmembrane segment spans residues 110 to 127 (MAWLAICVIAIGLMTRYI). The Cytoplasmic portion of the chain corresponds to 128–157 (DPVFAVLTRVAVAIMQMLGLQVTMPVLQPD). A helical transmembrane segment spans residues 158-177 (AFPFWDSCMMVLSIVAMILM). Residues 178 to 183 (TRKYVE) lie on the Periplasmic side of the membrane. Residues 184–206 (NWLLWVIINVISVVIFALQGVYA) traverse the membrane as a helical segment. Beta-nicotinamide D-riboside is bound by residues tryptophan 188 and asparagine 192. The Cytoplasmic portion of the chain corresponds to 207–239 (MSLEYLILTFIAVNGSRLWINSARERGSRALSR).

This sequence belongs to the nicotinamide ribonucleoside (NR) uptake permease (TC 4.B.1) family.

It is found in the cell inner membrane. In terms of biological role, required for nicotinamide riboside transport across the inner membrane. In Salmonella typhimurium (strain LT2 / SGSC1412 / ATCC 700720), this protein is Nicotinamide riboside transporter PnuC (pnuC).